Here is a 427-residue protein sequence, read N- to C-terminus: Serine hydroxymethyltransferase (427 aa).

Residues L122 and 126–128 contribute to the (6S)-5,6,7,8-tetrahydrofolate site; that span reads GHL. N6-(pyridoxal phosphate)lysine is present on K231. (6S)-5,6,7,8-tetrahydrofolate is bound by residues E247 and 355 to 357; that span reads SPF.

The protein belongs to the SHMT family. In terms of assembly, homodimer. The cofactor is pyridoxal 5'-phosphate.

The protein localises to the cytoplasm. It catalyses the reaction (6R)-5,10-methylene-5,6,7,8-tetrahydrofolate + glycine + H2O = (6S)-5,6,7,8-tetrahydrofolate + L-serine. It functions in the pathway one-carbon metabolism; tetrahydrofolate interconversion. It participates in amino-acid biosynthesis; glycine biosynthesis; glycine from L-serine: step 1/1. Catalyzes the reversible interconversion of serine and glycine with tetrahydrofolate (THF) serving as the one-carbon carrier. This reaction serves as the major source of one-carbon groups required for the biosynthesis of purines, thymidylate, methionine, and other important biomolecules. Also exhibits THF-independent aldolase activity toward beta-hydroxyamino acids, producing glycine and aldehydes, via a retro-aldol mechanism. The polypeptide is Serine hydroxymethyltransferase (Microcystis aeruginosa (strain NIES-843 / IAM M-2473)).